Here is a 160-residue protein sequence, read N- to C-terminus: Protein max (160 aa).

Over residues 1-13 (MSDNDDIEVESDE) the composition is skewed to acidic residues. The disordered stretch occupies residues 1-40 (MSDNDDIEVESDEEQPRFQSAADKRAHHNALERKRRDHIK). S2 carries the N-acetylserine modification. Phosphoserine occurs at positions 2 and 11. The 52-residue stretch at 23–74 (DKRAHHNALERKRRDHIKDSFHSLRDSVPSLQGEKASRAQILDKATEYIQYM) folds into the bHLH domain. The span at 29 to 40 (NALERKRRDHIK) shows a compositional bias: basic and acidic residues. An N6-acetyllysine modification is found at K66. Residues 81–102 (HQQDIDDLKRQNALLEQQVRAL) are leucine-zipper. The disordered stretch occupies residues 103–160 (EKARSSAQLQTNYPSSDNSLYTNAKGSTISAFDGGSDSSSESEPEEPQSRKKLRMEAS). S107 carries the post-translational modification Phosphoserine. Over residues 107–132 (SSAQLQTNYPSSDNSLYTNAKGSTIS) the composition is skewed to polar residues. Residues 152-156 (RKKLR) carry the Nuclear localization signal motif. An N6-acetyllysine mark is found at K153 and K154.

This sequence belongs to the MAX family. As to quaternary structure, efficient DNA binding requires dimerization with another bHLH protein. Binds DNA as a heterodimer with MYC or MAD. Part of the E2F6.com-1 complex in G0 phase composed of E2F6, MGA, MAX, TFDP1, CBX3, BAT8, EUHMTASE1, RING1, RNF2, MBLR, L3MBTL2 and YAF2. Component of some MLL1/MLL complex, at least composed of the core components KMT2A/MLL1, ASH2L, HCFC1/HCF1, WDR5 and RBBP5, as well as the facultative components BACC1, CHD8, E2F6, HSP70, INO80C, KANSL1, LAS1L, MAX, MCRS1, MGA, MYST1/MOF, PELP1, PHF20, PRP31, RING2, RUVB1/TIP49A, RUVB2/TIP49B, SENP3, TAF1, TAF4, TAF6, TAF7, TAF9 and TEX10. Interacts with SPAG9. The heterodimer MYC:MAX interacts with ABI1; the interaction may enhance MYC:MAX transcriptional activity. Post-translationally, reversible lysine acetylation might regulate the nuclear-cytoplasmic shuttling of specific Max complexes. In terms of tissue distribution, high levels found in the brain, heart and lung while lower levels are seen in the liver, kidney and skeletal muscle.

Its subcellular location is the nucleus. The protein localises to the cell projection. It is found in the dendrite. Transcription regulator. Forms a sequence-specific DNA-binding protein complex with MYC or MAD which recognizes the core sequence 5'-CAC[GA]TG-3'. The MYC:MAX complex is a transcriptional activator, whereas the MAD:MAX complex is a repressor. May repress transcription via the recruitment of a chromatin remodeling complex containing H3 'Lys-9' histone methyltransferase activity. Represses MYC transcriptional activity from E-box elements. The polypeptide is Protein max (Homo sapiens (Human)).